Consider the following 369-residue polypeptide: C-C chemokine receptor type 9 (369 aa).

Residues 1–48 (MTPTDFTSPIPNMADDYGSESTSSMEDYVNFNFTDFYCEKNNVRQFAS) lie on the Extracellular side of the membrane. The N-linked (GlcNAc...) asparagine glycan is linked to N32. 2 disulfides stabilise this stretch: C38–C289 and C119–C198. The helical transmembrane segment at 49 to 74 (HFLPPLYWLVFIVGALGNSLVILVYW) threads the bilayer. The Cytoplasmic portion of the chain corresponds to 75–85 (YCTRVKTMTDM). A helical transmembrane segment spans residues 86–109 (FLLNLAIADLLFLVTLPFWAIAAA). Topologically, residues 110–120 (DQWKFQTFMCK) are extracellular. The helical transmembrane segment at 121–150 (VVNSMYKMNFYSCVLLIMCISVDRYIAIAQ) threads the bilayer. Over 151-159 (AMRAHTWRE) the chain is Cytoplasmic. The chain crosses the membrane as a helical span at residues 160-185 (KRLLYSKMVCFTIWVLAAALCIPEIL). The Extracellular portion of the chain corresponds to 186-208 (YSQIKEESGIAICTMVYPSDEST). Residues 209–243 (KLKSAVLTLKVILGFFLPFVVMACCYTIIIHTLIQ) traverse the membrane as a helical segment. Topologically, residues 244 to 248 (AKKSS) are cytoplasmic. A helical transmembrane segment spans residues 249-283 (KHKALKVTITVLTVFVLSQFPYNCILLVQTIDAYA). The Extracellular segment spans residues 284 to 290 (MFISNCA). Residues 291–321 (VSTNIDICFQVTQTIAFFHSCLNPVLYVFVG) form a helical membrane-spanning segment. At 322–369 (ERFRRDLVKTLKNLGCISQAQWVSFTRREGSLKLSSMLLETTSGALSL) the chain is on the cytoplasmic side.

Belongs to the G-protein coupled receptor 1 family. In terms of tissue distribution, highly expressed in the thymus and low in lymph nodes and spleen.

The protein localises to the cell membrane. In terms of biological role, receptor for chemokine SCYA25/TECK. Subsequently transduces a signal by increasing the intracellular calcium ions level. Functionally, (Microbial infection) Alternative coreceptor with CD4 for HIV-1 infection. This Homo sapiens (Human) protein is C-C chemokine receptor type 9 (CCR9).